Reading from the N-terminus, the 107-residue chain is uncharacterized protein (107 aa).

3 helical membrane-spanning segments follow: residues 16–36 (VIPC…SESL), 47–67 (IISL…HSLV), and 85–105 (LIVL…TSLI).

Its subcellular location is the membrane. This is an uncharacterized protein from Saccharomyces cerevisiae (strain ATCC 204508 / S288c) (Baker's yeast).